A 669-amino-acid chain; its full sequence is UvrABC system protein B (669 aa).

The Helicase ATP-binding domain occupies 26-183 (TNFHAGIAKQ…RHLTELQYTR (158 aa)). Residue 39 to 46 (GVTGSGKT) coordinates ATP. The short motif at 92-115 (YYDYYQPEAYVPASDTFIEKDSSI) is the Beta-hairpin element. The region spanning 431 to 597 (QVDDLISQIN…SVVRPISDIL (167 aa)) is the Helicase C-terminal domain. The 36-residue stretch at 631 to 666 (AAQMKMLEQQMYQHARDLEFEDAARIRDQIQRLREA) folds into the UVR domain.

Belongs to the UvrB family. As to quaternary structure, forms a heterotetramer with UvrA during the search for lesions. Interacts with UvrC in an incision complex.

It is found in the cytoplasm. The UvrABC repair system catalyzes the recognition and processing of DNA lesions. A damage recognition complex composed of 2 UvrA and 2 UvrB subunits scans DNA for abnormalities. Upon binding of the UvrA(2)B(2) complex to a putative damaged site, the DNA wraps around one UvrB monomer. DNA wrap is dependent on ATP binding by UvrB and probably causes local melting of the DNA helix, facilitating insertion of UvrB beta-hairpin between the DNA strands. Then UvrB probes one DNA strand for the presence of a lesion. If a lesion is found the UvrA subunits dissociate and the UvrB-DNA preincision complex is formed. This complex is subsequently bound by UvrC and the second UvrB is released. If no lesion is found, the DNA wraps around the other UvrB subunit that will check the other stand for damage. In Xylella fastidiosa (strain M12), this protein is UvrABC system protein B.